Here is a 296-residue protein sequence, read N- to C-terminus: NADH-cytochrome b5 reductase 2 (296 aa).

The chain crosses the membrane as a helical span at residues 12-29 (LPIALGVGAASIATAIIL). An FAD-binding FR-type domain is found at 47–151 (NEWIDLPIIK…KGPITKWEWK (105 aa)). Position 154-189 (154-189 (SYDSITLLGAGTGINPLYQLVHHIAENPEDNTKIHL)) interacts with FAD.

Belongs to the flavoprotein pyridine nucleotide cytochrome reductase family. The cofactor is FAD.

The protein resides in the mitochondrion outer membrane. It carries out the reaction 2 Fe(III)-[cytochrome b5] + NADH = 2 Fe(II)-[cytochrome b5] + NAD(+) + H(+). May mediate the reduction of outer membrane cytochrome b5. This Kluyveromyces lactis (strain ATCC 8585 / CBS 2359 / DSM 70799 / NBRC 1267 / NRRL Y-1140 / WM37) (Yeast) protein is NADH-cytochrome b5 reductase 2 (MCR1).